Reading from the N-terminus, the 320-residue chain is 33 kDa chaperonin (320 aa).

The segment covering 1–17 (MTDASGSERLKRTKDIS) has biased composition (basic and acidic residues). Residues 1–27 (MTDASGSERLKRTKDISESTPPSSLPD) form a disordered region. Intrachain disulfides connect Cys-262–Cys-264 and Cys-295–Cys-298.

It belongs to the HSP33 family. Post-translationally, under oxidizing conditions two disulfide bonds are formed involving the reactive cysteines. Under reducing conditions zinc is bound to the reactive cysteines and the protein is inactive.

It localises to the cytoplasm. Its function is as follows. Redox regulated molecular chaperone. Protects both thermally unfolding and oxidatively damaged proteins from irreversible aggregation. Plays an important role in the bacterial defense system toward oxidative stress. The sequence is that of 33 kDa chaperonin from Synechococcus sp. (strain JA-3-3Ab) (Cyanobacteria bacterium Yellowstone A-Prime).